The primary structure comprises 71 residues: UPF0346 protein SP70585_0986 (71 aa).

It belongs to the UPF0346 family.

The chain is UPF0346 protein SP70585_0986 from Streptococcus pneumoniae (strain 70585).